The primary structure comprises 71 residues: Phosphatidylinositol N-acetylglucosaminyltransferase subunit Y (71 aa).

The Cytoplasmic segment spans residues 1 to 5 (MIRSL). Residues 6–26 (PTMTVLIPLVSLAGLLYSASV) traverse the membrane as a helical segment. The Lumenal portion of the chain corresponds to 27 to 44 (EEGFPEGCTSASSLCFYS). A helical transmembrane segment spans residues 45 to 65 (LLLPVTVPVYVFFHLWTWMGL). The Cytoplasmic segment spans residues 66-71 (KLFRHN).

As to quaternary structure, component of the glycosylphosphatidylinositol-N-acetylglucosaminyltransferase (GPI-GnT) complex composed at least by PIGA, PIGC, PIGH, PIGP, PIGQ, PIGY and DPM2. Interacts directly with PIGA; this interaction regulates glycosylphosphatidylinositol-N-acetylglucosaminyltransferase activity. Does not interact with Ras proteins.

It localises to the endoplasmic reticulum membrane. Its pathway is glycolipid biosynthesis; glycosylphosphatidylinositol-anchor biosynthesis. In terms of biological role, part of the glycosylphosphatidylinositol-N-acetylglucosaminyltransferase (GPI-GnT) complex that catalyzes the transfer of N-acetylglucosamine from UDP-N-acetylglucosamine to phosphatidylinositol and participates in the first step of GPI biosynthesis. May act by regulating the catalytic subunit PIGA. This is Phosphatidylinositol N-acetylglucosaminyltransferase subunit Y from Mus musculus (Mouse).